Here is a 438-residue protein sequence, read N- to C-terminus: Aspartate--tRNA(Asp/Asn) ligase (438 aa).

Glutamate 176 provides a ligand contact to L-aspartate. Residues glutamine 198–lysine 201 form an aspartate region. Arginine 220 contributes to the L-aspartate binding site. Residues arginine 220–glutamate 222, arginine 228–leucine 230, and glutamate 361 contribute to the ATP site. Mg(2+) contacts are provided by glutamate 361 and serine 364. L-aspartate-binding residues include serine 364 and arginine 368. Glycine 409 to arginine 412 provides a ligand contact to ATP.

Belongs to the class-II aminoacyl-tRNA synthetase family. Type 2 subfamily. Homodimer. The cofactor is Mg(2+).

It localises to the cytoplasm. The catalysed reaction is tRNA(Asx) + L-aspartate + ATP = L-aspartyl-tRNA(Asx) + AMP + diphosphate. Aspartyl-tRNA synthetase with relaxed tRNA specificity since it is able to aspartylate not only its cognate tRNA(Asp) but also tRNA(Asn). Reaction proceeds in two steps: L-aspartate is first activated by ATP to form Asp-AMP and then transferred to the acceptor end of tRNA(Asp/Asn). This Methanocaldococcus jannaschii (strain ATCC 43067 / DSM 2661 / JAL-1 / JCM 10045 / NBRC 100440) (Methanococcus jannaschii) protein is Aspartate--tRNA(Asp/Asn) ligase.